Here is a 218-residue protein sequence, read N- to C-terminus: Cytidylate kinase (218 aa).

ATP is bound at residue 11–19 (GPSGVGKST).

Belongs to the cytidylate kinase family. Type 1 subfamily.

The protein resides in the cytoplasm. It carries out the reaction CMP + ATP = CDP + ADP. It catalyses the reaction dCMP + ATP = dCDP + ADP. The polypeptide is Cytidylate kinase (Mycoplasmopsis synoviae (strain 53) (Mycoplasma synoviae)).